The following is a 295-amino-acid chain: Polyisoprenoid diphosphate/phosphate phosphohydrolase PLPP6 (295 aa).

Disordered regions lie at residues 1–39 (MPSPRRSMEGRPLGVSASSSSSSPGSPAHGGGGGGSRFE) and 61–90 (SESPVHRRGSFPLAAAGPSQSPAPPLPEED). Residues 1-132 (MPSPRRSMEG…ESSSWGSVRP (132 aa)) lie on the Cytoplasmic side of the membrane. Low complexity predominate over residues 16–27 (SASSSSSSPGSP). Residues Ser-26, Ser-36, and Ser-70 each carry the phosphoserine modification. The chain crosses the membrane as a helical span at residues 133 to 153 (LMKLLEISGHGIPWLLGTLYC). The Lumenal segment spans residues 154–164 (LCRSDSWAGRE). A helical transmembrane segment spans residues 165–185 (VLMNLLFALLLDLLLVALIKG). Residues 184-192 (KGLVRRRRP) form a phosphatase sequence motif I region. The Cytoplasmic portion of the chain corresponds to 186–228 (LVRRRRPAHNQMDMFVTLSVDKYSFPSGHATRAALMSRFILNH). Residues 211 to 214 (PSGH) form a phosphatase sequence motif II region. The active-site Proton donors is His-214. Residues 229 to 249 (LVLAIPLRVLVVLWAFVLGLS) form a helical membrane-spanning segment. The tract at residues 249-260 (SRVMLGRHNVTD) is phosphatase sequence motif III. The Lumenal segment spans residues 250–260 (RVMLGRHNVTD). His-256 serves as the catalytic Nucleophile. Residues 261–281 (VAFGFFLGYMQYSIVDYCWLS) traverse the membrane as a helical segment. Residues 282–295 (PHNAPVLFLLWSQR) lie on the Cytoplasmic side of the membrane.

Belongs to the PA-phosphatase related phosphoesterase family. Phosphorylation by PKC activates the phosphatase activity towards presqualene diphosphate. Widely expressed. Expressed in most organs, in particular gastrointestinal organs, spleen, placenta, kidney, thymus and brain.

Its subcellular location is the endoplasmic reticulum membrane. The protein localises to the nucleus envelope. It localises to the nucleus inner membrane. It carries out the reaction presqualene diphosphate + H2O = presqualene phosphate + phosphate + H(+). The catalysed reaction is presqualene phosphate + H2O = presqualene alcohol + phosphate. The enzyme catalyses (2E,6E)-farnesyl diphosphate + H2O = (2E,6E)-farnesyl phosphate + phosphate + H(+). It catalyses the reaction (2E,6E)-farnesyl phosphate + H2O = (2E,6E)-farnesol + phosphate. It carries out the reaction (2E,6E,10E)-geranylgeranyl diphosphate + H2O = (2E,6E,10E)-geranylgeranyl phosphate + phosphate + H(+). The catalysed reaction is (2E,6E,10E)-geranylgeranyl phosphate + H2O = (2E,6E,10E)-geranylgeraniol + phosphate. The enzyme catalyses (2E)-geranyl diphosphate + H2O = (2E)-geranyl phosphate + phosphate + H(+). It catalyses the reaction (2E)-geranyl phosphate + H2O = (2E)-geraniol + phosphate. It carries out the reaction 1,2-dihexadecanoyl-sn-glycero-3-phosphate + H2O = 1,2-dihexadecanoyl-sn-glycerol + phosphate. With respect to regulation, inhibited by propranolol. Not inhibited by N-ethylmaleimide or bromoenolactome. Its function is as follows. Magnesium-independent polyisoprenoid diphosphatase that catalyzes the sequential dephosphorylation of presqualene, farnesyl, geranyl and geranylgeranyl diphosphates. Functions in the innate immune response through the dephosphorylation of presqualene diphosphate which acts as a potent inhibitor of the signaling pathways contributing to polymorphonuclear neutrophils activation. May regulate the biosynthesis of cholesterol and related sterols by dephosphorylating presqualene and farnesyl diphosphate, two key intermediates in this biosynthetic pathway. May also play a role in protein prenylation by acting on farnesyl diphosphate and its derivative geranylgeranyl diphosphate, two precursors for the addition of isoprenoid anchors to membrane proteins. Has a lower activity towards phosphatidic acid (PA), but through phosphatidic acid dephosphorylation may participate in the biosynthesis of phospholipids and triacylglycerols. May also act on ceramide-1-P, lysophosphatidic acid (LPA) and sphing-4-enine 1-phosphate/sphingosine-1-phosphate. The chain is Polyisoprenoid diphosphate/phosphate phosphohydrolase PLPP6 from Homo sapiens (Human).